A 308-amino-acid chain; its full sequence is Probable 5-dehydro-4-deoxyglucarate dehydratase (308 aa).

This sequence belongs to the DapA family.

The enzyme catalyses 5-dehydro-4-deoxy-D-glucarate + H(+) = 2,5-dioxopentanoate + CO2 + H2O. Its pathway is carbohydrate acid metabolism; D-glucarate degradation; 2,5-dioxopentanoate from D-glucarate: step 2/2. The polypeptide is Probable 5-dehydro-4-deoxyglucarate dehydratase (ycbC) (Bacillus subtilis (strain 168)).